Consider the following 657-residue polypeptide: Glycogen debranching enzyme (657 aa).

The active-site Nucleophile is the Asp336. The Proton donor role is filled by Glu371. A compositionally biased stretch (basic and acidic residues) spans Asn458–Asp467. The segment at Asn458–Lys479 is disordered.

This sequence belongs to the glycosyl hydrolase 13 family.

The catalysed reaction is Hydrolysis of (1-&gt;6)-alpha-D-glucosidic linkages to branches with degrees of polymerization of three or four glucose residues in limit dextrin.. The protein operates within glycan degradation; glycogen degradation. In terms of biological role, removes maltotriose and maltotetraose chains that are attached by 1,6-alpha-linkage to the limit dextrin main chain, generating a debranched limit dextrin. This is Glycogen debranching enzyme from Shigella sonnei (strain Ss046).